A 287-amino-acid polypeptide reads, in one-letter code: Elongation factor Ts (287 aa).

Residues 80 to 83 (TDFL) are involved in Mg(2+) ion dislocation from EF-Tu.

The protein belongs to the EF-Ts family.

The protein localises to the cytoplasm. In terms of biological role, associates with the EF-Tu.GDP complex and induces the exchange of GDP to GTP. It remains bound to the aminoacyl-tRNA.EF-Tu.GTP complex up to the GTP hydrolysis stage on the ribosome. This chain is Elongation factor Ts, found in Pseudomonas fluorescens (strain SBW25).